The primary structure comprises 213 residues: Glutathione S-transferase (213 aa).

A GST N-terminal domain is found at 4–81 (AKPILYGAWI…YLEDKYPQHP (78 aa)). One can recognise a GST C-terminal domain in the interval 86-211 (DIKTKGLDLQ…LPQNQPDAPS (126 aa)).

The protein belongs to the GST superfamily. Zeta family.

The protein localises to the cytoplasm. It catalyses the reaction RX + glutathione = an S-substituted glutathione + a halide anion + H(+). Has a glutathione transferase activity with ethacrynic acid and nitrophenyl acetate. Has low glutathione peroxidase activity with cumene hydroperoxide. This Triticum aestivum (Wheat) protein is Glutathione S-transferase (GSTZ1).